The chain runs to 1019 residues: MYILVWKEGQQIRTFQDLEECGQFQTASNITDGQIFSINVTPTMSKGGETGETQLRRLMYLSASTEPEKCNAEYLADMAHVATLRNKQIGVSGFLLYSSPFFFQVIEGTDEDLDFLFAKISADPRHERCIVLANGPCTGRMYGEWHMKDSHIDNITKHPAIKTILFQIARSFSSMWSYLPKNAANMLLLGKNPNKQAPEPMSVVVTFIYLVEFSSILAHPGLTEQCADILAAFVDACVRNVEGTGGQVAKFITGICMAYWPINRAEDALVGLQQLSEDLAELRSQQPPGSALSLIYSRCGVHYGRALLCNAGFRKADFTLLGDCINTASRITSLSVKLKVPLLLSFEVRCLLGDEMREELESSGLHKVKGRDKPVQVYQFNAPELDSAMVRAKIEQFNPGRYRALCPVKPYESLHPAQRPPIFDDTPRENQPKLSQVQRRDSLVDRLSLIAKLAFPSSMMAGGEGQLITLTYISQAAHPMSRLDLASIQRIAFARNESSNITGSLLYVSGLFVQTLEGPKGAVVSLYLKIRQDKRHKDVVAVFMAPIDERVYGSPLDMTSATEEMLATFPPLQDVLSQLAKSFISLETYVPSTVVRYLTAGNNPRNLQPVSVEVVMLATDICSFTPLSEKCSLTEVWTICNTFIDACTSAICNEGGEVIKLIGDCVTAYFPPTGADNAVHACQEIVSFCAQLRDAFHDVLDCRSVVACGVGLDFGQVIMAQCGSLGMTEFVVAGEVSARVMEVEALTREAGRAIVITEPVADRLSPKLRDTGIVPCQEGVDGVPCYGILGPEWELDVATIKKNIYGFHDARALAAMKKVDDGTNAPGRGAPAGGIPSSPKVRPPGRTNSVSSYTPDPNEALDPRMAESVFLDMCHQRGDTANNSIAVKLRQAANDDRLDLGRMLQGPHELMPVMQAIKHLTNLRMLNMSDNFVDDNNVGELVESCIPMRSLQVLDLSNNPGLTKVIALKRLIKHNTQVREILLNGTRIAPTEQRKLQSSMNVNRLCASTDLKGSHKYEH.

In terms of domain architecture, BLUF 1 spans 55–148 (LRRLMYLSAS…GRMYGEWHMK (94 aa)). The 129-residue stretch at 204 to 332 (VVTFIYLVEF…DCINTASRIT (129 aa)) folds into the Guanylate cyclase 1 domain. One can recognise a BLUF 2 domain in the interval 467–559 (LITLTYISQA…RVYGSPLDMT (93 aa)). The 130-residue stretch at 615–744 (VMLATDICSF…EVSARVMEVE (130 aa)) folds into the Guanylate cyclase 2 domain. The disordered stretch occupies residues 822–861 (GTNAPGRGAPAGGIPSSPKVRPPGRTNSVSSYTPDPNEAL). A compositionally biased stretch (low complexity) spans 825–839 (APGRGAPAGGIPSSP). Polar residues predominate over residues 846–855 (RTNSVSSYTP).

It belongs to the adenylyl cyclase class-4/guanylyl cyclase family. In terms of assembly, heterotetramer of two alpha and two beta subunits. FAD is required as a cofactor.

It localises to the cell projection. Its subcellular location is the cilium. It is found in the flagellum. It carries out the reaction ATP = 3',5'-cyclic AMP + diphosphate. With respect to regulation, activity increased by up to 80-fold under blue light. Acts as a blue light photoreceptor for the step-up photophobic response. Mediates photoavoidance. This chain is Photoactivated adenylate cyclase subunit alpha, found in Euglena gracilis.